Here is a 191-residue protein sequence, read N- to C-terminus: Putative glutathione-dependent formaldehyde-activating enzyme (191 aa).

A CENP-V/GFA domain is found at 20 to 166; the sequence is FSGGTLRCHC…FKSVGLETYD (147 aa). 7 residues coordinate Zn(2+): Cys27, Cys29, Cys48, Cys50, Cys53, Cys95, and Cys98.

It belongs to the Gfa family. Zn(2+) serves as cofactor.

The catalysed reaction is S-(hydroxymethyl)glutathione = glutathione + formaldehyde. It functions in the pathway one-carbon metabolism; formaldehyde degradation; formate from formaldehyde (glutathione route): step 1/3. Functionally, catalyzes the condensation of formaldehyde and glutathione to S-hydroxymethylglutathione. This chain is Putative glutathione-dependent formaldehyde-activating enzyme, found in Colletotrichum graminicola (strain M1.001 / M2 / FGSC 10212) (Maize anthracnose fungus).